Consider the following 394-residue polypeptide: Teichoic acid poly(glycerol phosphate) polymerase (394 aa).

Belongs to the CDP-glycerol glycerophosphotransferase family.

Its subcellular location is the cell membrane. It carries out the reaction 4-O-[(2R)-glycerylphospho]-N-acetyl-beta-D-mannosaminyl-(1-&gt;4)-N-acetyl-alpha-D-glucosaminyl di-trans,octa-cis-undecaprenyl diphosphate + n CDP-glycerol = 4-O-{[(2R)-1-glycerylphospho](n)-(2R)-1-glycerylphospho}-N-acetyl-beta-D-mannosaminyl-(1-&gt;4)-N-acetyl-alpha-D-glucosaminyl undecaprenyl diphosphate + n CMP + n H(+). Functionally, catalyzes the addition of further 2-8 glycerol phosphate units from CDP-glycerol to the single glycerol phosphate unit bound to the prenolpyrophosphate-linked disaccharide. The function in the cell is unknown since the product is not part of the poly(ribitol phosphate) teichoic acid found in the cell walls. The protein is Teichoic acid poly(glycerol phosphate) polymerase (tarF) of Bacillus spizizenii (strain ATCC 23059 / NRRL B-14472 / W23) (Bacillus subtilis subsp. spizizenii).